We begin with the raw amino-acid sequence, 270 residues long: Probable ribosomal RNA small subunit methyltransferase A (270 aa).

Residues H19, L21, G46, E67, D92, and N107 each coordinate S-adenosyl-L-methionine.

This sequence belongs to the class I-like SAM-binding methyltransferase superfamily. rRNA adenine N(6)-methyltransferase family. RsmA subfamily.

It localises to the cytoplasm. Functionally, specifically dimethylates two adjacent adenosines in the loop of a conserved hairpin near the 3'-end of 16S rRNA in the 30S particle. May play a critical role in biogenesis of 30S subunits. This Methanococcoides burtonii (strain DSM 6242 / NBRC 107633 / OCM 468 / ACE-M) protein is Probable ribosomal RNA small subunit methyltransferase A.